The following is a 674-amino-acid chain: Zyxin (674 aa).

Residues P35–Q447 form a disordered region. Positions L86–S109 are enriched in pro residues. Low complexity predominate over residues F110–G120. 5 stretches are compositionally biased toward pro residues: residues L121 to L148, A162 to P180, K187 to S209, K222 to A240, and A254 to P266. 2 stretches are compositionally biased toward basic and acidic residues: residues A328–A341 and Q358–R387. 3 consecutive LIM zinc-binding domains span residues E481–C542, C543–A600, and P601–A671.

Belongs to the zyxin/ajuba family. As to quaternary structure, interacts (via LIM2 domain) with hesx1/anf1.

Its subcellular location is the cytoplasm. It is found in the cytoskeleton. The protein localises to the cell junction. The protein resides in the focal adhesion. Functionally, adhesion plaque protein. May be a component of a signal transduction pathway that mediates adhesion-stimulated changes in gene expression. Suppresses the transcription-repressing activity of hesx1/anf1. The sequence is that of Zyxin from Xenopus tropicalis (Western clawed frog).